A 514-amino-acid chain; its full sequence is Na(+)/H(+) antiporter NhaB (514 aa).

Helical transmembrane passes span 23-43 (LALL…PFIA), 63-83 (PLLP…TSAA), 97-117 (LLLM…LFIF), 120-140 (LLLS…AAAF), 144-164 (FLDA…FYGI), 202-222 (LMMH…VGEP), 238-258 (FFLR…LTCM), 303-323 (AVIG…VGLI), 357-377 (LTVF…APII), 391-411 (LFYL…VGTI), 447-467 (ATPN…APLI), and 475-495 (VWMA…CVEF).

It belongs to the NhaB Na(+)/H(+) (TC 2.A.34) antiporter family.

It localises to the cell inner membrane. It carries out the reaction 2 Na(+)(in) + 3 H(+)(out) = 2 Na(+)(out) + 3 H(+)(in). Its function is as follows. Na(+)/H(+) antiporter that extrudes sodium in exchange for external protons. This chain is Na(+)/H(+) antiporter NhaB, found in Salmonella newport (strain SL254).